The primary structure comprises 165 residues: 2-C-methyl-D-erythritol 2,4-cyclodiphosphate synthase (165 aa).

A divalent metal cation-binding residues include Asp-9 and His-11. Residues 9 to 11 (DVH) and 35 to 36 (HS) contribute to the 4-CDP-2-C-methyl-D-erythritol 2-phosphate site. Residue His-43 coordinates a divalent metal cation. 4-CDP-2-C-methyl-D-erythritol 2-phosphate contacts are provided by residues 57-59 (DIG), 101-107 (AQAPKML), 133-136 (TTTE), Phe-140, and Arg-143.

It belongs to the IspF family. Homotrimer. A divalent metal cation is required as a cofactor.

It carries out the reaction 4-CDP-2-C-methyl-D-erythritol 2-phosphate = 2-C-methyl-D-erythritol 2,4-cyclic diphosphate + CMP. Its pathway is isoprenoid biosynthesis; isopentenyl diphosphate biosynthesis via DXP pathway; isopentenyl diphosphate from 1-deoxy-D-xylulose 5-phosphate: step 4/6. Involved in the biosynthesis of isopentenyl diphosphate (IPP) and dimethylallyl diphosphate (DMAPP), two major building blocks of isoprenoid compounds. Catalyzes the conversion of 4-diphosphocytidyl-2-C-methyl-D-erythritol 2-phosphate (CDP-ME2P) to 2-C-methyl-D-erythritol 2,4-cyclodiphosphate (ME-CPP) with a corresponding release of cytidine 5-monophosphate (CMP). The protein is 2-C-methyl-D-erythritol 2,4-cyclodiphosphate synthase of Pseudoalteromonas translucida (strain TAC 125).